A 107-amino-acid chain; its full sequence is Integration host factor subunit beta (107 aa).

The disordered stretch occupies residues 56–107 (RPSRVGRNPKSGEKVLVPEKHVPHFKPGKELRERVDRNAGEPLKADAADDDL). Positions 65-107 (KSGEKVLVPEKHVPHFKPGKELRERVDRNAGEPLKADAADDDL) are enriched in basic and acidic residues.

This sequence belongs to the bacterial histone-like protein family. Heterodimer of an alpha and a beta chain.

Its function is as follows. This protein is one of the two subunits of integration host factor, a specific DNA-binding protein that functions in genetic recombination as well as in transcriptional and translational control. In Paraburkholderia phymatum (strain DSM 17167 / CIP 108236 / LMG 21445 / STM815) (Burkholderia phymatum), this protein is Integration host factor subunit beta.